A 481-amino-acid polypeptide reads, in one-letter code: Keratin, type I cytoskeletal 39 (481 aa).

Residues Met-1–Val-25 form a disordered region. Positions Met-1–Glu-90 are head. One can recognise an IF rod domain in the interval Glu-90–Leu-401. The segment at Lys-91–Glu-125 is coil 1A. The segment at Cys-126–Asp-136 is linker 1. Positions Tyr-137–Cys-237 are coil 1B. Positions Gln-238–Val-253 are linker 12. The segment at Asp-254–Leu-397 is coil 2. A tail region spans residues Asp-398–Val-481.

This sequence belongs to the intermediate filament family. As to quaternary structure, heterotetramer of two type I and two type II keratins.

In terms of biological role, may play a role in late hair differentiation. The polypeptide is Keratin, type I cytoskeletal 39 (Krt39) (Rattus norvegicus (Rat)).